The following is a 74-amino-acid chain: Conotoxin AbVIA (74 aa).

Positions 1–17 are cleaved as a signal peptide; sequence VLIIAVLFLTACQLTTA. Positions 18–38 are excised as a propeptide; sequence VTSSRGEQKHRALRSTDKKFK. 3 cysteine pairs are disulfide-bonded: C43–C57, C50–C61, and C56–C68. Serine amide is present on S73.

It belongs to the conotoxin O1 superfamily. In terms of tissue distribution, expressed by the venom duct.

It localises to the secreted. This chain is Conotoxin AbVIA, found in Conus abbreviatus (Abbreviated cone).